The following is a 278-amino-acid chain: 4-diphosphocytidyl-2-C-methyl-D-erythritol kinase (278 aa).

Lysine 9 is a catalytic residue. ATP is bound at residue 93-103 (PLGGGLGGGSS). The active site involves aspartate 135.

Belongs to the GHMP kinase family. IspE subfamily.

It catalyses the reaction 4-CDP-2-C-methyl-D-erythritol + ATP = 4-CDP-2-C-methyl-D-erythritol 2-phosphate + ADP + H(+). Its pathway is isoprenoid biosynthesis; isopentenyl diphosphate biosynthesis via DXP pathway; isopentenyl diphosphate from 1-deoxy-D-xylulose 5-phosphate: step 3/6. In terms of biological role, catalyzes the phosphorylation of the position 2 hydroxy group of 4-diphosphocytidyl-2C-methyl-D-erythritol. The chain is 4-diphosphocytidyl-2-C-methyl-D-erythritol kinase from Nitrosomonas europaea (strain ATCC 19718 / CIP 103999 / KCTC 2705 / NBRC 14298).